The sequence spans 1078 residues: Protein U90 (1078 aa).

Residues 1-12 show a composition bias toward polar residues; sequence MESAKDTTSTSM. Disordered regions lie at residues 1-28, 464-483, 703-732, and 781-818; these read MESA…SNEE, SPTD…PTRQ, HMNN…DHKT, and ESED…DCTS.

This chain is Protein U90 (U90), found in Homo sapiens (Human).